A 306-amino-acid chain; its full sequence is Protein STPG3 (306 aa).

The tract at residues 210 to 230 (CSYTPLLPTSKPSGEKRPSPN) is disordered.

This is Protein STPG3 from Mus musculus (Mouse).